Here is a 222-residue protein sequence, read N- to C-terminus: (4-{4-[2-(gamma-L-glutamylamino)ethyl]phenoxymethyl}furan-2-yl)methanamine synthase (222 aa).

Belongs to the MfnF family.

The catalysed reaction is gamma-L-glutamyltyramine + [5-(aminomethyl)furan-3-yl]methyl diphosphate = (4-{4-[2-(gamma-L-glutamylamino)ethyl]phenoxymethyl}furan-2-yl)methanamine + diphosphate. Its pathway is cofactor biosynthesis; methanofuran biosynthesis. Its function is as follows. Catalyzes the condensation between 5-(aminomethyl)-3-furanmethanol diphosphate (F1-PP) and gamma-glutamyltyramine to produce APMF-Glu. The polypeptide is (4-{4-[2-(gamma-L-glutamylamino)ethyl]phenoxymethyl}furan-2-yl)methanamine synthase (Methanococcus vannielii).